Here is a 490-residue protein sequence, read N- to C-terminus: Glutathione reductase (490 aa).

Residues Ser19 and Gly20 each coordinate FAD. Residue Ser19 coordinates glutathione. Arg26 contacts glutathione. FAD contacts are provided by Glu39, Thr48, Cys49, and Lys57. Cys49 and Cys54 are oxidised to a cystine. Tyr110 lines the glutathione pocket. Ala126 is an FAD binding site. Residues Ala208, Ile211, Glu214, Arg231, and Arg237 each contribute to the NADP(+) site. Glutathione is bound at residue Ser246. Gly297 contacts NADP(+). Asp337 is an FAD binding site. Residue Glu343 participates in NADP(+) binding. Thr345 lines the FAD pocket. Arg353 is a binding site for glutathione. An NADP(+)-binding site is contributed by Val379. Position 432 (Lys432) interacts with glutathione. Residue His479 participates in FAD binding. His479 (proton acceptor) is an active-site residue.

This sequence belongs to the class-I pyridine nucleotide-disulfide oxidoreductase family. Homodimer. The cofactor is FAD.

It localises to the cytoplasm. The protein localises to the mitochondrion. The catalysed reaction is 2 glutathione + NADP(+) = glutathione disulfide + NADPH + H(+). Functionally, catalyzes the reduction of glutathione disulfide (GSSG) to reduced glutathione (GSH). Constitutes the major mechanism to maintain a high GSH:GSSG ratio in the cytosol. The sequence is that of Glutathione reductase (GLR1) from Debaryomyces hansenii (strain ATCC 36239 / CBS 767 / BCRC 21394 / JCM 1990 / NBRC 0083 / IGC 2968) (Yeast).